Reading from the N-terminus, the 20-residue chain is Small ribosomal subunit protein bS20 (20 aa).

This sequence belongs to the bacterial ribosomal protein bS20 family.

Its function is as follows. Binds directly to 16S ribosomal RNA. This Brevundimonas diminuta (Pseudomonas diminuta) protein is Small ribosomal subunit protein bS20 (rpsT).